The primary structure comprises 410 residues: Acyl-CoA-binding domain-containing protein 5-B (410 aa).

Residues 12–101 enclose the ACB domain; sequence AQKRFEAAVK…IQLIIETLPV (90 aa). Residues 23–32, 43–47, Lys-69, and Tyr-88 each bind an acyl-CoA; these read IRSLPEDGSY and YSYYK. Positions 119-128 are enriched in acidic residues; the sequence is VEDDDDDDDE. Disordered stretches follow at residues 119-165, 221-242, and 254-320; these read VEDD…LDDY, SDDEMDSDSMDKPATPEKGSGV, and GANM…DRMD. Residues 326 to 355 adopt a coiled-coil conformation; the sequence is TQITTILSELEDNMQDVLRRLTTLEQLTAS. The hydrophobic stretch at 382–404 threads the membrane; the sequence is SPFTAVLTVLWPFAVHWLVQFYL.

The protein resides in the membrane. Binds medium- and long-chain acyl-CoA esters. The chain is Acyl-CoA-binding domain-containing protein 5-B (acbd5b) from Danio rerio (Zebrafish).